A 254-amino-acid chain; its full sequence is Proline-rich protein 23A3 (254 aa).

Disordered regions lie at residues 1–50 (MLRT…LEAP), 161–196 (ASPP…GAEQ), and 212–254 (PFPG…LVYE). A compositionally biased stretch (low complexity) spans 35-50 (EPACPEPLAQPELEAP). Over residues 214-241 (PGSPLQPLPPSPSRNPQEQLPPCPPCSP) the composition is skewed to pro residues. Basic residues predominate over residues 243–254 (APRRARKRLVYE).

This sequence belongs to the PRR23 family.

The chain is Proline-rich protein 23A3 from Mus musculus (Mouse).